The primary structure comprises 232 residues: LexA repressor (232 aa).

Residues 35-55 (IREIGDAAGLQSTSSVAYQLK) constitute a DNA-binding region (H-T-H motif). The span at 61-85 (GFLRRDPNKPRAVDVRHLPETESRS) shows a compositional bias: basic and acidic residues. The interval 61–104 (GFLRRDPNKPRAVDVRHLPETESRSSKAATQAKSKAPQAGVHDP) is disordered. The span at 86–99 (SKAATQAKSKAPQA) shows a compositional bias: low complexity. Catalysis depends on for autocatalytic cleavage activity residues S156 and K193.

The protein belongs to the peptidase S24 family. In terms of assembly, homodimer.

It carries out the reaction Hydrolysis of Ala-|-Gly bond in repressor LexA.. Represses a number of genes involved in the response to DNA damage (SOS response), including recA and lexA. In the presence of single-stranded DNA, RecA interacts with LexA causing an autocatalytic cleavage which disrupts the DNA-binding part of LexA, leading to derepression of the SOS regulon and eventually DNA repair. The protein is LexA repressor of Corynebacterium glutamicum (strain ATCC 13032 / DSM 20300 / JCM 1318 / BCRC 11384 / CCUG 27702 / LMG 3730 / NBRC 12168 / NCIMB 10025 / NRRL B-2784 / 534).